A 725-amino-acid chain; its full sequence is Ferric reduction oxidase 2 (725 aa).

Residues 1 to 28 (MEIEKSNNGGSNPSAGEEFKDMIKGVTK) lie on the Cytoplasmic side of the membrane. The helical transmembrane segment at 29 to 48 (FLMMVIFLGTIMLWIMMPTL) threads the bilayer. The Extracellular portion of the chain corresponds to 49–74 (TYRTKWLPHLRIKFGTSTYFGATGTT). The chain crosses the membrane as a helical span at residues 75 to 93 (LFMYMFPMMVVACLGCVYL). At 94–125 (HFKNRKSPHHIDRETKGGVWSKLRKPMLVKGP) the chain is on the cytoplasmic side. The helical transmembrane segment at 126–149 (LGIVSVTEITFLAMFVALLLWCFI) threads the bilayer. At 150 to 217 (TYLRNSFATI…MGLTSESSIK (68 aa)) the chain is on the extracellular side. The Ferric oxidoreductase domain maps to 183 to 303 (LGLIGNICLA…YLYIVFMLFF (121 aa)). Residues 218–241 (YHIWLGHMVMALFTVHGLCYIIYW) form a helical membrane-spanning segment. 2 residues coordinate heme: His-219 and His-233. Residues 242–291 (ASMHEISQMIMWDTKGVSNLAGEIALAAGLVMWATTYPKIRRRFFEVFFY) are Cytoplasmic-facing. A helical transmembrane segment spans residues 292 to 316 (THYLYIVFMLFFVLHVGISFSFIAL). The heme site is built by His-293 and His-306. The Extracellular segment spans residues 317–338 (PGFYIFLVDRFLRFLQSRENVR). One can recognise an FAD-binding FR-type domain in the interval 332–437 (QSRENVRLLA…EGPYGPASAD (106 aa)). The chain crosses the membrane as a helical span at residues 339 to 359 (LLAARILPSDTMELTFSKNSK). Over 360 to 554 (LVYSPTSIMF…SISSILGPNS (195 aa)) the chain is Cytoplasmic. 381–384 (HPFT) provides a ligand contact to FAD. 429–432 (GPYG) is a binding site for NAD(+). The chain crosses the membrane as a helical span at residues 555-577 (WLWLGAILASSFLIFMIIIGIIT). At 578 to 597 (RYYIYPIDHNTNKIYSLTSK) the chain is on the extracellular side. Residues 598-619 (TIIYILVISVSIMATCSAAMLW) traverse the membrane as a helical segment. Over 620–725 (NKKKYGKVES…LHFESISFSW (106 aa)) the chain is Cytoplasmic.

This sequence belongs to the ferric reductase (FRE) family. The cofactor is FAD. Expressed in the epidermal cells of the roots. High expression in lateral roots and root hairs. Detected in leaves, stems, siliques and in flowers in anthers and styles.

It is found in the cell membrane. The enzyme catalyses 2 a Fe(II)-siderophore + NAD(+) + H(+) = 2 a Fe(III)-siderophore + NADH. In terms of biological role, flavocytochrome that transfers electrons across the plasma membrane to reduce ferric iron chelates to form soluble ferrous iron in the rhizosphere. May be involved in the delivery of iron to developing pollen grains. Also acts as a copper-chelate reductase. Involved in glycine betaine-mediated chilling tolerance and reactive oxygen species accumulation. The chain is Ferric reduction oxidase 2 (FRO2) from Arabidopsis thaliana (Mouse-ear cress).